A 276-amino-acid polypeptide reads, in one-letter code: 3-methyl-2-oxobutanoate hydroxymethyltransferase (276 aa).

Residues Asp-44 and Asp-83 each coordinate Mg(2+). Residues 44-45 (DS), Asp-83, and Lys-112 each bind 3-methyl-2-oxobutanoate. Glu-114 contacts Mg(2+). Glu-180 serves as the catalytic Proton acceptor. Residues 256 to 276 (PTEAQSSRMKPDELSRALNAE) are disordered.

Belongs to the PanB family. In terms of assembly, homodecamer; pentamer of dimers. The cofactor is Mg(2+).

It is found in the cytoplasm. It carries out the reaction 3-methyl-2-oxobutanoate + (6R)-5,10-methylene-5,6,7,8-tetrahydrofolate + H2O = 2-dehydropantoate + (6S)-5,6,7,8-tetrahydrofolate. The protein operates within cofactor biosynthesis; (R)-pantothenate biosynthesis; (R)-pantoate from 3-methyl-2-oxobutanoate: step 1/2. Functionally, catalyzes the reversible reaction in which hydroxymethyl group from 5,10-methylenetetrahydrofolate is transferred onto alpha-ketoisovalerate to form ketopantoate. This is 3-methyl-2-oxobutanoate hydroxymethyltransferase from Gluconacetobacter diazotrophicus (strain ATCC 49037 / DSM 5601 / CCUG 37298 / CIP 103539 / LMG 7603 / PAl5).